The primary structure comprises 120 residues: Chaperonin GroEL (120 aa).

23-27 (DGTTT) contacts ATP.

This sequence belongs to the chaperonin (HSP60) family. In terms of assembly, forms a cylinder of 14 subunits composed of two heptameric rings stacked back-to-back. Interacts with the co-chaperonin GroES.

It localises to the cytoplasm. The catalysed reaction is ATP + H2O + a folded polypeptide = ADP + phosphate + an unfolded polypeptide.. In terms of biological role, together with its co-chaperonin GroES, plays an essential role in assisting protein folding. The GroEL-GroES system forms a nano-cage that allows encapsulation of the non-native substrate proteins and provides a physical environment optimized to promote and accelerate protein folding. In Mycobacterium shimoidei, this protein is Chaperonin GroEL.